A 491-amino-acid polypeptide reads, in one-letter code: MDGVSTAILLLLLAVISLSLTFTSWGKGQLPPGPKPLPILGNLLQLRSQDLLTSLTKLSKDYGSVFTVYLGPRRVIVLSGYQTVKEALVDKGEEFSGRGSYPIFFNFTKGNGIAFSDGERWKILRRFSVQILRNFGMGKRSIEERILEEGSFLLDVLRKTEGKPFDPVFILSRSVSNIICSVIFGSRFDYDDERLLTIIHFINDNFQIMSSPWGEMYNIFPSLLDWVPGPHRRVFRNFGGMKDLIARSVREHQDSLDPNSPRDFIDCFLTKMVQEKQDPLSHFNMDTLLMTTHNLLFGGTETVGTTLRHAFLILMKYPKVQARVQEEIDCVVGRSRMPTLEDRASMPYTDAVIHEVQRFADVIPMNLPHRVIRDTPFRGFLIPKGTDVITLLNTVHYDSDQFKTPQEFNPEHFLDANQSFKKSPAFMPFSAGRRLCLGEPLARMELFIYLTSILQNFTLHPLVEPEDIDLTPLSSGLGNLPRPFQLCMRIR.

Cysteine 436 is a heme binding site.

The protein belongs to the cytochrome P450 family. The cofactor is heme.

It localises to the endoplasmic reticulum membrane. The protein localises to the microsome membrane. Involved in the regio- and stereoselective transformation of naphthalene to trans-1R-hydroxy-2R-glutathionyl-1,2-dihydronaphthalene in the presence of glutathione and glutathione S-transferases. It specifically catalyzes the production of a very reactive and potentially toxic intermediate, the 2R,2S arene oxide, that is associated with necrosis of the unciliated bronchiolar epithelial cells or club cells in lung. This chain is Cytochrome P450 2F2 (Cyp2f2), found in Rattus norvegicus (Rat).